The following is a 569-amino-acid chain: Urease subunit alpha (569 aa).

Positions 131–569 constitute a Urease domain; the sequence is GGFDSHIHFI…LPMAQRYFLF (439 aa). The Ni(2+) site is built by His136, His138, and Lys219. Lys219 is modified (N6-carboxylysine). His221 serves as a coordination point for substrate. The Ni(2+) site is built by His248 and His274. The active-site Proton donor is His322. A Ni(2+)-binding site is contributed by Asp362.

Belongs to the metallo-dependent hydrolases superfamily. Urease alpha subunit family. Heterotrimer of UreA (gamma), UreB (beta) and UreC (alpha) subunits. Three heterotrimers associate to form the active enzyme. Requires Ni cation as cofactor. Carboxylation allows a single lysine to coordinate two nickel ions.

Its subcellular location is the cytoplasm. The catalysed reaction is urea + 2 H2O + H(+) = hydrogencarbonate + 2 NH4(+). The protein operates within nitrogen metabolism; urea degradation; CO(2) and NH(3) from urea (urease route): step 1/1. In Roseobacter denitrificans (strain ATCC 33942 / OCh 114) (Erythrobacter sp. (strain OCh 114)), this protein is Urease subunit alpha.